Here is a 186-residue protein sequence, read N- to C-terminus: dCTP deaminase (186 aa).

106–111 (KSTYAR) contributes to the dCTP binding site. Glu-132 acts as the Proton donor/acceptor in catalysis. Residues Gln-151, Tyr-166, and Gln-176 each coordinate dCTP.

The protein belongs to the dCTP deaminase family. In terms of assembly, homotrimer.

The catalysed reaction is dCTP + H2O + H(+) = dUTP + NH4(+). The protein operates within pyrimidine metabolism; dUMP biosynthesis; dUMP from dCTP (dUTP route): step 1/2. Functionally, catalyzes the deamination of dCTP to dUTP. This is dCTP deaminase from Nautilia profundicola (strain ATCC BAA-1463 / DSM 18972 / AmH).